We begin with the raw amino-acid sequence, 203 residues long: Vexin (203 aa).

Residues 59–70 are compositionally biased toward basic and acidic residues; it reads HRTDRRDGEGRW. The disordered stretch occupies residues 59–101; it reads HRTDRRDGEGRWSGRFQNPRLQGPHPAKTPARPVGTSEPKSAN.

It belongs to the vexin family.

Its subcellular location is the cell membrane. The protein localises to the nucleus. Functionally, required for neurogenesis in the neural plate and retina. Strongly cooperates with neural bHLH factors to promote neurogenesis. This chain is Vexin, found in Bos taurus (Bovine).